A 127-amino-acid chain; its full sequence is Nitrogenase-stabilizing/protective protein NifW (127 aa).

It belongs to the NifW family. As to quaternary structure, homotrimer; associates with NifD.

Functionally, may protect the nitrogenase Fe-Mo protein from oxidative damage. This chain is Nitrogenase-stabilizing/protective protein NifW, found in Rhizobium etli (strain ATCC 51251 / DSM 11541 / JCM 21823 / NBRC 15573 / CFN 42).